An 88-amino-acid polypeptide reads, in one-letter code: Alpha-latrotoxin associated low molecular weight protein 2 (88 aa).

Positions 1–19 (MLKLICIAFLVTVLTLVAG) are cleaved as a signal peptide. 3 disulfides stabilise this stretch: Cys-30–Cys-66, Cys-46–Cys-62, and Cys-49–Cys-75.

The protein belongs to the arthropod CHH/MIH/GIH/VIH hormone family. In terms of tissue distribution, expressed by the venom gland.

It localises to the secreted. May increase the toxicity of alpha-latrotoxin and/or other venom components. Is non-toxic to mice and to the cockroach Periplaneta americana. This Latrodectus hesperus (Western black widow spider) protein is Alpha-latrotoxin associated low molecular weight protein 2.